The sequence spans 355 residues: MKKHNFNAGPSILPREVIEDTAKAILDFNGSGLSLMEISHRAKDFQPVVDEAEALFKELLNIPEGYSVLFLGGGASMEFCMVPFNFLEKKAAYLNTGVWAKKAMKEAKGFGEVVEVASSAEATYTYIPKDYTIPADADYFHITTNNTIYGTELKEDLNSPVPMVADMSSDIFSRPIDVSKYICIYGGAQKNLAPAGVTFVIVKNDAVGKVSRYIPSMLNYQTHIDNGSMFNTPPVVPIYAALLNLRWIKAQGGVKEMERRAIEKADMLYAEIDRNKLFVGTAAKEDRSRMNICFVMAPEYKDLEADFMKFATEKGMVGIKGHRSVGGFRASCYNALPKESVQALIDCMQEFEKLH.

Arg-41 is a binding site for L-glutamate. Pyridoxal 5'-phosphate-binding positions include 75 to 76 (AS), Trp-99, Thr-147, Asp-166, and Gln-189. Lys-190 carries the N6-(pyridoxal phosphate)lysine modification. 231 to 232 (NT) lines the pyridoxal 5'-phosphate pocket.

This sequence belongs to the class-V pyridoxal-phosphate-dependent aminotransferase family. SerC subfamily. Homodimer. Pyridoxal 5'-phosphate is required as a cofactor.

Its subcellular location is the cytoplasm. The catalysed reaction is O-phospho-L-serine + 2-oxoglutarate = 3-phosphooxypyruvate + L-glutamate. It catalyses the reaction 4-(phosphooxy)-L-threonine + 2-oxoglutarate = (R)-3-hydroxy-2-oxo-4-phosphooxybutanoate + L-glutamate. Its pathway is amino-acid biosynthesis; L-serine biosynthesis; L-serine from 3-phospho-D-glycerate: step 2/3. It functions in the pathway cofactor biosynthesis; pyridoxine 5'-phosphate biosynthesis; pyridoxine 5'-phosphate from D-erythrose 4-phosphate: step 3/5. Catalyzes the reversible conversion of 3-phosphohydroxypyruvate to phosphoserine and of 3-hydroxy-2-oxo-4-phosphonooxybutanoate to phosphohydroxythreonine. The polypeptide is Phosphoserine aminotransferase (Bacteroides thetaiotaomicron (strain ATCC 29148 / DSM 2079 / JCM 5827 / CCUG 10774 / NCTC 10582 / VPI-5482 / E50)).